The chain runs to 221 residues: Glutathione S-transferase U25 (221 aa).

Alanine 2 bears the N-acetylalanine mark. The GST N-terminal domain maps to 3–82; it reads DEVILLDFWP…YIDEVWPSKT (80 aa). Glutathione-binding positions include 13-14, 39-40, 53-54, and 66-67; these read SM, NK, KI, and ES. Positions 88–208 constitute a GST C-terminal domain; it reads DPYQRAQAKF…LPDSEKIIKF (121 aa). At threonine 149 the chain carries Phosphothreonine.

It belongs to the GST superfamily. Tau family.

It localises to the cytoplasm. Its subcellular location is the cytosol. It carries out the reaction RX + glutathione = an S-substituted glutathione + a halide anion + H(+). In terms of biological role, may be involved in the conjugation of reduced glutathione to a wide number of exogenous and endogenous hydrophobic electrophiles and have a detoxification role against certain herbicides. This chain is Glutathione S-transferase U25 (GSTU25), found in Arabidopsis thaliana (Mouse-ear cress).